A 176-amino-acid chain; its full sequence is Ribosome maturation factor RimM (176 aa).

A PRC barrel domain is found at 93-166 (EGEYYHADLI…RVVIELPAEI (74 aa)).

It belongs to the RimM family. In terms of assembly, binds ribosomal protein uS19.

The protein resides in the cytoplasm. In terms of biological role, an accessory protein needed during the final step in the assembly of 30S ribosomal subunit, possibly for assembly of the head region. Essential for efficient processing of 16S rRNA. May be needed both before and after RbfA during the maturation of 16S rRNA. It has affinity for free ribosomal 30S subunits but not for 70S ribosomes. This chain is Ribosome maturation factor RimM, found in Rhodopseudomonas palustris (strain BisB18).